The primary structure comprises 258 residues: Synapse differentiation-inducing gene protein 1 (258 aa).

Topologically, residues 1-181 (MAGVVEQKSG…NFLVMPPRDH (181 aa)) are cytoplasmic. Residue Ser137 is modified to Phosphoserine. A helical transmembrane segment spans residues 182 to 202 (LGLSVFSMLCCFWPLGIAAFY). The Extracellular segment spans residues 203-228 (LSHETNKAVAKGDFHQASTSSRRALF). The segment at residues 229–249 (LAVLSITIGTGIYVGVAVALI) is an intramembrane region (helical). Residues 250-258 (AYLSKSNHL) lie on the Extracellular side of the membrane.

Belongs to the CD225/Dispanin family. As to quaternary structure, homodimer. Interacts with GRIA1 and GRIA2.

The protein localises to the cell membrane. Its subcellular location is the early endosome membrane. The protein resides in the postsynaptic density membrane. It is found in the synapse. It localises to the cell projection. The protein localises to the dendrite. Its subcellular location is the dendritic spine. Its function is as follows. May regulate AMPA receptor content at nascent synapses, and have a role in postsynaptic development and maturation. This is Synapse differentiation-inducing gene protein 1 (SYNDIG1) from Bos taurus (Bovine).